The primary structure comprises 366 residues: MQRLPIEQYSALLAEKQQKLTELLAPFNSPPLDVFASETSHFRMRAEFRIWHEQDDFYHIMFDQKTKQRFRIDQFPIASQLINQMMLALLPLLKQHNILTHRLFQIDYLSTLSNKIIVSLLYHKTLNEEWLQAATQLKQQLIKQGFDVQIIGRANKQKICLQQDFVDEILPVKNQQYIYRQVENSFTQPNATVNCKMLEWAIDCTKNSQGDLLELYCGNGNFSIALAQNFRKVLATEIAKPSVSAAQFNIAANKIDNLHIIRMSAEDFTQAMNGVRAFNRLKGINLQDYQCNTIFVDPPRAGLDMATVKLVQNYERILYISCNPYTLCENLQELTKTHRIEKAALFDQFPYTEHMESGVWLIKKSN.

Residues glutamine 188, tyrosine 216, asparagine 221, glutamate 237, and aspartate 297 each coordinate S-adenosyl-L-methionine. Cysteine 322 serves as the catalytic Nucleophile. Glutamate 356 functions as the Proton acceptor in the catalytic mechanism.

This sequence belongs to the class I-like SAM-binding methyltransferase superfamily. RNA M5U methyltransferase family. TrmA subfamily.

It carries out the reaction uridine(54) in tRNA + S-adenosyl-L-methionine = 5-methyluridine(54) in tRNA + S-adenosyl-L-homocysteine + H(+). The catalysed reaction is uridine(341) in tmRNA + S-adenosyl-L-methionine = 5-methyluridine(341) in tmRNA + S-adenosyl-L-homocysteine + H(+). Its function is as follows. Dual-specificity methyltransferase that catalyzes the formation of 5-methyluridine at position 54 (m5U54) in all tRNAs, and that of position 341 (m5U341) in tmRNA (transfer-mRNA). This is tRNA/tmRNA (uracil-C(5))-methyltransferase from Histophilus somni (strain 129Pt) (Haemophilus somnus).